Consider the following 498-residue polypeptide: ATP synthase subunit beta, chloroplastic (498 aa).

172–179 (GGAGVGKT) serves as a coordination point for ATP.

The protein belongs to the ATPase alpha/beta chains family. As to quaternary structure, F-type ATPases have 2 components, CF(1) - the catalytic core - and CF(0) - the membrane proton channel. CF(1) has five subunits: alpha(3), beta(3), gamma(1), delta(1), epsilon(1). CF(0) has four main subunits: a(1), b(1), b'(1) and c(9-12).

The protein resides in the plastid. The protein localises to the chloroplast thylakoid membrane. The catalysed reaction is ATP + H2O + 4 H(+)(in) = ADP + phosphate + 5 H(+)(out). Functionally, produces ATP from ADP in the presence of a proton gradient across the membrane. The catalytic sites are hosted primarily by the beta subunits. The polypeptide is ATP synthase subunit beta, chloroplastic (Agapanthus africanus (Lily of the Nile)).